Reading from the N-terminus, the 733-residue chain is Protein OBERON 3 (733 aa).

Positions 1-15 (MIGEKDLAGDGECSR) are enriched in basic and acidic residues. Disordered regions lie at residues 1–42 (MIGE…YHQK) and 118–142 (NPNS…KKSN). Over residues 21–30 (PRFSNLNNQT) the composition is skewed to polar residues. A coiled-coil region spans residues 120-153 (NSSKRKAHEEEEEAEEEEDKKSNKIETLNLSLAL). The PHD-type zinc-finger motif lies at 436 to 500 (SCMCPVCLRF…MFHCIGCAHK (65 aa)). The interval 592-614 (VAAETSYRKDEASVTPSTSKDQK) is disordered. A coiled-coil region spans residues 644–733 (MFQKKADEAR…RMEVTRQQLV (90 aa)).

In terms of assembly, self-interacts. Interacts with OBE1 and OBE2. Interacts with OBE4.

The protein localises to the nucleus. Probable transcription factor that functions redundantly with OBE4 in specification of the hypophysis and establishment of the embryonic root. Involved in the activation of ARF5/MP-dependent gene expression during embryonic root meristem initiation. Involved in shoot meristem homeostasis. The chain is Protein OBERON 3 from Arabidopsis thaliana (Mouse-ear cress).